A 222-amino-acid polypeptide reads, in one-letter code: MKEVRIEAGWKKVLQEEFDKFYFEKLTDFVREEYRQSPIYPPARFIFRAFDTCPFDRVKVVILGQDPYHEPGQAEGLAFSVPTGIPIPPSLRNICEEIRTDTGQPAHIDGGSLLPWVEQGVLLLNATLTVRASQAGSHQGHGWETFTDAAIEALAKRREHLVFLLWGSYARRKSAMIDPRCHLILEAPHPSPLSAHRGFFGCKHFSRTNAYLRQHGIAPIVW.

Asp66 functions as the Proton acceptor in the catalytic mechanism.

It belongs to the uracil-DNA glycosylase (UDG) superfamily. UNG family.

Its subcellular location is the cytoplasm. It catalyses the reaction Hydrolyzes single-stranded DNA or mismatched double-stranded DNA and polynucleotides, releasing free uracil.. Its function is as follows. Excises uracil residues from the DNA which can arise as a result of misincorporation of dUMP residues by DNA polymerase or due to deamination of cytosine. This Porphyromonas gingivalis (strain ATCC BAA-308 / W83) protein is Uracil-DNA glycosylase.